The primary structure comprises 724 residues: ATPase family protein 2 homolog (724 aa).

ATP is bound by residues Pro-281–Leu-287 and Gly-503–Leu-508.

This sequence belongs to the AAA ATPase family. AFG2 subfamily. Homohexamer; ATP binding induces oligomerization. Forms a ring-shaped particle of about 12 nm diameter, that displays 6-fold radial symmetry. Interacts (via N-terminus) with kinase air-2; the interaction is direct and inhibits air-2 kinase activity in an ATPase-dependent manner.

The protein localises to the cytoplasm. It catalyses the reaction ATP + H2O = ADP + phosphate + H(+). Functionally, ATP-dependent chaperone which uses the energy provided by ATP hydrolysis to generate mechanical force to disassemble protein complexes. Required for various steps of embryonic mitosis including centrosome duplication, spindle assembly, ER dynamics and cell cycle progression. Regulates the stability and activity of kinase air-2, a component of the chromosomal passenger complex (CPC). Inhibits air-2 kinase activity from metaphase to late telophase and negatively regulates air-2 stability during mitotic exit. Controls ER transition into sheet-like structures at the onset of mitosis, possibly by regulating homotypic membrane fusion. The polypeptide is ATPase family protein 2 homolog (Caenorhabditis elegans).